Reading from the N-terminus, the 508-residue chain is RanBP-type and C3HC4-type zinc finger-containing protein 1 (508 aa).

The residue at position 1 (methionine 1) is an N-acetylmethionine. Residues 1-218 (MDEKTKKAEE…PGCEMCCRAR (218 aa)) are interaction with IRF3. Residues 1–268 (MDEKTKKAEE…NYLQHVQLEQ (268 aa)) form an interaction with TAB2 region. Serine 50 is subject to Phosphoserine. A Ubiquitin-like domain is found at 55 to 119 (IRLCVSVEDA…DQETLHSHGI (65 aa)). The tract at residues 69 to 131 (VTIWLTVRPD…NGDGAYLYLL (63 aa)) is interaction with RNF31. Residues 163–191 (QSRGPLEPVLPKPRTNQEPGQPDAAPESP) form a disordered region. The RanBP2-type zinc-finger motif lies at 188 to 220 (PESPPVGWQCPGCTFINKPTRPGCEMCCRARPE). The stretch at 231–259 (DEEERARLAGEEEALRQYQQRKQQQQEGN) forms a coiled coil. Residues 276 to 504 (EPTECPVCYS…VNGIPCHPSC (229 aa)) are TRIAD supradomain. Zn(2+) is bound by residues cysteine 280, cysteine 283, cysteine 298, histidine 300, cysteine 303, cysteine 306, and cysteine 321. An RING-type 1 zinc finger spans residues 280–330 (CPVCYSVLAPGEAVVLRECLHTFCRECLQGTIRNSQEAEVACPFIDSTYSC). Tyrosine 328 is subject to Phosphotyrosine. Cysteine 330, cysteine 369, cysteine 374, cysteine 389, cysteine 392, cysteine 397, cysteine 400, histidine 404, cysteine 409, cysteine 445, and cysteine 448 together coordinate Zn(2+). An IBR-type zinc finger spans residues 349-409 (QRFLDLGVSI…CKAIHEHMNC (61 aa)). The RING-type 2; atypical zinc finger occupies 445–474 (CPQCRIVVQKKDGCDWIRCTVCHTEICWVT). The active site involves cysteine 458. Positions 463 and 466 each coordinate Zn(2+).

Belongs to the RBR family. Component of the LUBAC complex (linear ubiquitin chain assembly complex) which consists of SHARPIN, RBCK1 and RNF31. LUBAC has a MW of approximately 600 kDa suggesting a heteromultimeric assembly of its subunits. Interacts with beta-I-type (PRKCB1) and zeta-type protein kinase C (PRKCZ). Interacts with UBE2L3. Interacts with IREB2 only in iron-rich conditions. Associates with the TNF-R1 signaling complex (TNF-RSC) in a stimulation-dependent manner. Interacts with EYA1, TAB2, TAB3, MAP3K7 TRAF6 and RIPK1. Interacts with IRF3. In terms of processing, auto-ubiquitinated. Auto-ubiquitination leads to degradation by the proteasome. Phosphorylated. In vitro, phosphorylation inhibits auto-ubiquitination activity.

The enzyme catalyses [E2 ubiquitin-conjugating enzyme]-S-ubiquitinyl-L-cysteine + [acceptor protein]-L-lysine = [E2 ubiquitin-conjugating enzyme]-L-cysteine + [acceptor protein]-N(6)-ubiquitinyl-L-lysine.. It functions in the pathway protein modification; protein ubiquitination. E3 ubiquitin-protein ligase, which accepts ubiquitin from specific E2 ubiquitin-conjugating enzymes, such as UBE2L3/UBCM4, and then transfers it to substrates. Functions as an E3 ligase for oxidized IREB2 and both heme and oxygen are necessary for IREB2 ubiquitination. Promotes ubiquitination of TAB2 and IRF3 and their degradation by the proteasome. Component of the LUBAC complex which conjugates linear ('Met-1'-linked) polyubiquitin chains to substrates and plays a key role in NF-kappa-B activation and regulation of inflammation. LUBAC conjugates linear polyubiquitin to IKBKG and RIPK1 and is involved in activation of the canonical NF-kappa-B and the JNK signaling pathways. Linear ubiquitination mediated by the LUBAC complex interferes with TNF-induced cell death and thereby prevents inflammation. LUBAC is recruited to the TNF-R1 signaling complex (TNF-RSC) following polyubiquitination of TNF-RSC components by BIRC2 and/or BIRC3 and to conjugate linear polyubiquitin to IKBKG and possibly other components contributing to the stability of the complex. The LUBAC complex is also involved in innate immunity by conjugating linear polyubiquitin chains at the surface of bacteria invading the cytosol to form the ubiquitin coat surrounding bacteria. LUBAC is not able to initiate formation of the bacterial ubiquitin coat, and can only promote formation of linear polyubiquitins on pre-existing ubiquitin. The bacterial ubiquitin coat acts as an 'eat-me' signal for xenophagy and promotes NF-kappa-B activation. Together with OTULIN, the LUBAC complex regulates the canonical Wnt signaling during angiogenesis. Binds polyubiquitin of different linkage types. The protein is RanBP-type and C3HC4-type zinc finger-containing protein 1 (Rbck1) of Mus musculus (Mouse).